A 60-amino-acid chain; its full sequence is Large ribosomal subunit protein uL30 (60 aa).

The protein belongs to the universal ribosomal protein uL30 family. As to quaternary structure, part of the 50S ribosomal subunit.

The polypeptide is Large ribosomal subunit protein uL30 (Paraburkholderia phytofirmans (strain DSM 17436 / LMG 22146 / PsJN) (Burkholderia phytofirmans)).